Here is a 98-residue protein sequence, read N- to C-terminus: Large ribosomal subunit protein uL23 (98 aa).

This sequence belongs to the universal ribosomal protein uL23 family. In terms of assembly, part of the 50S ribosomal subunit. Contacts protein L29, and trigger factor when it is bound to the ribosome.

Functionally, one of the early assembly proteins it binds 23S rRNA. One of the proteins that surrounds the polypeptide exit tunnel on the outside of the ribosome. Forms the main docking site for trigger factor binding to the ribosome. The protein is Large ribosomal subunit protein uL23 of Lactobacillus delbrueckii subsp. bulgaricus (strain ATCC 11842 / DSM 20081 / BCRC 10696 / JCM 1002 / NBRC 13953 / NCIMB 11778 / NCTC 12712 / WDCM 00102 / Lb 14).